Consider the following 938-residue polypeptide: ATP-dependent 6-phosphofructokinase subunit beta (938 aa).

An N-terminal catalytic PFK domain 1 region spans residues 1-552 (MTQSLPLLNG…HLDNFMAINS (552 aa)). Residues Gly-185, 249–250 (RC), and 279–282 (GDGS) each bind ATP. Asp-280 provides a ligand contact to Mg(2+). Beta-D-fructose 6-phosphate is bound by residues 325 to 327 (SID), Arg-362, 369 to 371 (MGR), Glu-426, Arg-454, and 460 to 463 (HVQR). Residue Asp-327 is the Proton acceptor of the active site. Residues 553 to 566 (ADHIEPKLPEHTHM) are interdomain linker. Residues 567 to 938 (KIAIVNVGAP…ADHLVGRKKL (372 aa)) form a C-terminal regulatory PFK domain 2 region. Beta-D-fructose 2,6-bisphosphate contacts are provided by residues Arg-637, 695–699 (TLSNN), Arg-733, 740–742 (QGG), Lys-826, 832–835 (HVQQ), and Arg-915.

Belongs to the phosphofructokinase type A (PFKA) family. ATP-dependent PFK group I subfamily. Eukaryotic two domain clade 'E' sub-subfamily. As to quaternary structure, heterooctamer of 4 alpha and 4 beta chains. Mg(2+) is required as a cofactor.

The protein resides in the cytoplasm. It catalyses the reaction beta-D-fructose 6-phosphate + ATP = beta-D-fructose 1,6-bisphosphate + ADP + H(+). Its pathway is carbohydrate degradation; glycolysis; D-glyceraldehyde 3-phosphate and glycerone phosphate from D-glucose: step 3/4. With respect to regulation, allosterically activated by ADP, AMP, or fructose 2,6-bisphosphate, and allosterically inhibited by ATP or citrate. Functionally, catalyzes the phosphorylation of D-fructose 6-phosphate to fructose 1,6-bisphosphate by ATP, the first committing step of glycolysis. This chain is ATP-dependent 6-phosphofructokinase subunit beta (PFK2), found in Kluyveromyces lactis (strain ATCC 8585 / CBS 2359 / DSM 70799 / NBRC 1267 / NRRL Y-1140 / WM37) (Yeast).